The chain runs to 532 residues: Protein DETOXIFICATION 48 (532 aa).

The next 12 helical transmembrane spans lie at 65 to 85 (ISGP…ISML), 95 to 115 (LAGG…VISG), 136 to 156 (LGLT…PISF), 174 to 194 (ISSV…LLSL), 211 to 231 (VTYS…LLVV), 235 to 255 (MGVA…VVLL), 279 to 301 (GWSA…WWWY), 322 to 342 (GILI…SLGV), 363 to 383 (IISL…AVLV), 397 to 417 (ILQL…GNCP), 437 to 457 (INLG…GFVF), and 464 to 484 (LWFG…CALL). The tract at residues 496–532 (EELTSQTPGKSPPLLPIASSKSRSTSGTEDMMRTMLV) is disordered. Residues 514 to 523 (SSKSRSTSGT) show a composition bias toward polar residues.

The protein belongs to the multi antimicrobial extrusion (MATE) (TC 2.A.66.1) family. In terms of tissue distribution, highly expressed in shoot apices relative to leaves. At vegetative stages, highly expressed at the stipules. At reproductive stages, most highly expressed in the mature pollen. Also expressed in the tips of sepals.

It is found in the golgi apparatus membrane. The protein localises to the late endosome membrane. In terms of biological role, functions as a multidrug and toxin extrusion transporter. Contributes to iron homeostasis during stress responses and senescence. Could be involved in specifying the lateral organ initiation rate. May act as a negative regulator of hypocotyl cell elongation in the light. In Arabidopsis thaliana (Mouse-ear cress), this protein is Protein DETOXIFICATION 48.